The primary structure comprises 526 residues: Bifunctional purine biosynthesis protein PurH (526 aa).

The MGS-like domain maps to 1 to 148 (MQRPIIIRRA…KNYSNVVVVV (148 aa)).

The protein belongs to the PurH family.

The catalysed reaction is (6R)-10-formyltetrahydrofolate + 5-amino-1-(5-phospho-beta-D-ribosyl)imidazole-4-carboxamide = 5-formamido-1-(5-phospho-D-ribosyl)imidazole-4-carboxamide + (6S)-5,6,7,8-tetrahydrofolate. It carries out the reaction IMP + H2O = 5-formamido-1-(5-phospho-D-ribosyl)imidazole-4-carboxamide. Its pathway is purine metabolism; IMP biosynthesis via de novo pathway; 5-formamido-1-(5-phospho-D-ribosyl)imidazole-4-carboxamide from 5-amino-1-(5-phospho-D-ribosyl)imidazole-4-carboxamide (10-formyl THF route): step 1/1. It participates in purine metabolism; IMP biosynthesis via de novo pathway; IMP from 5-formamido-1-(5-phospho-D-ribosyl)imidazole-4-carboxamide: step 1/1. The chain is Bifunctional purine biosynthesis protein PurH from Baumannia cicadellinicola subsp. Homalodisca coagulata.